A 71-amino-acid chain; its full sequence is Putative membrane protein insertion efficiency factor (71 aa).

Belongs to the UPF0161 family.

The protein localises to the cell membrane. Could be involved in insertion of integral membrane proteins into the membrane. This chain is Putative membrane protein insertion efficiency factor, found in Clostridium acetobutylicum (strain ATCC 824 / DSM 792 / JCM 1419 / IAM 19013 / LMG 5710 / NBRC 13948 / NRRL B-527 / VKM B-1787 / 2291 / W).